A 108-amino-acid polypeptide reads, in one-letter code: Transcription factor S (108 aa).

Residues C5, C8, C21, C24, C69, C72, C97, and C100 each coordinate Zn(2+). The C4-type zinc-finger motif lies at 5 to 24 (CPKCNNLMLPKDGKLKCAVC). The segment at 65 to 105 (TRIECPKCGHNEAYWWLQQTRCADEPETRFYKCKKCGHTWR) adopts a TFIIS-type zinc-finger fold.

This sequence belongs to the archaeal RpoM/eukaryotic RPA12/RPB9/RPC11 RNA polymerase family.

Its function is as follows. Induces RNA cleavage activity in the RNA polymerase. In its presence, the cleavage activity of the RNA polymerase truncates the RNA back to position +15 in a stepwise manner by releasing mainly dinucleotides from the 3'-end of the nascent RNA. The truncated RNAs are able to continue elongation. Involved in transcriptional proofreading and fidelity. Misincorporation of nucleotides during elongation of transcription leads to arrested elongation complexes which are rescued by TFS-promoted removal of a dinucleotide from the 3'-end. TFS is able to induce a cleavage resynthesis cycle in stalled elongation complexes (resulting from the next missing nucleotide or a reduced incorporation rate of a wrong nucleotide) preventing misincorporation and enabling proofreading in a post-incorporation manner. Pausing of elongation complexes is the main determinant of TFS-induced RNA cleavage. The protein is Transcription factor S of Methanocaldococcus jannaschii (strain ATCC 43067 / DSM 2661 / JAL-1 / JCM 10045 / NBRC 100440) (Methanococcus jannaschii).